The following is an 834-amino-acid chain: Protein kintoun (834 aa).

Disordered regions lie at residues 214–239 (TAEEQEPHPLAHMFPTKPPAPGKQEP), 374–415 (SRED…SVAP), 547–669 (KGKV…STGR), and 759–834 (KKNQ…EMDD). Position 378 is a phosphoserine (serine 378). Acidic residues predominate over residues 389-398 (PVEEDPDGEL). The span at 552–571 (AKKDNAPLDVKFERNQEGHA) shows a compositional bias: basic and acidic residues. Over residues 582–596 (EEEEDKENQDQEPES) the composition is skewed to acidic residues. The span at 597 to 607 (DQQQQQQVQNK) shows a compositional bias: low complexity. Composition is skewed to basic residues over residues 608–619 (KPGKKQRKKNKK) and 759–773 (KKNQKRRDLKLRAQQ). Serine 777 is modified (phosphoserine). The span at 785 to 798 (EETRGSALKQEENP) shows a compositional bias: basic and acidic residues.

This sequence belongs to the PIH1 family. Kintoun subfamily. Interacts with Pp1alpha-96A, Pp1-87B, Pp1-13C and flw.

It is found in the cytoplasm. In terms of biological role, required for cytoplasmic pre-assembly of axonemal dyneins, thereby playing a central role in motility in cilia and flagella. Involved in pre-assembly of dynein arm complexes in the cytoplasm before intraflagellar transport loads them for the ciliary compartment. This Drosophila melanogaster (Fruit fly) protein is Protein kintoun.